The sequence spans 48 residues: uncharacterized protein (48 aa).

This is an uncharacterized protein from Schizosaccharomyces pombe (strain 972 / ATCC 24843) (Fission yeast).